Here is a 932-residue protein sequence, read N- to C-terminus: Protocadherin gamma-A8 (932 aa).

Residues 1-29 (MAAPQSRPRRGELILLCALLGTLWEIGRG) form the signal peptide. 6 Cadherin domains span residues 30–133 (QIRY…NPKF), 134–242 (QVED…APVF), 243–347 (PHPI…RPEV), 348–452 (IITS…PPTF), 453–562 (PHAS…APEI), and 570–682 (DGST…KPSV). Residues 30–692 (QIRYSVPEET…DPNDSSLTLY (663 aa)) lie on the Extracellular side of the membrane. Asn47 is a glycosylation site (N-linked (GlcNAc...) asparagine). N-linked (GlcNAc...) asparagine glycosylation is found at Asn414, Asn419, and Asn545. A glycan (N-linked (GlcNAc...) asparagine) is linked at Asn685. A helical membrane pass occupies residues 693 to 713 (LVVAVAAISCVFLAFVAVLLG). At 714-932 (LRLRRWHKSR…KKKSGKKEKK (219 aa)) the chain is on the cytoplasmic side. Disordered stretches follow at residues 804–841 (ADHG…WPNN) and 902–932 (ATLT…KEKK). Residues 810–841 (APPNTDWRFSQAQRPGTSGSQNGDDTGTWPNN) show a composition bias toward polar residues. The segment covering 922-932 (NKKKSGKKEKK) has biased composition (basic residues).

The protein localises to the cell membrane. Functionally, potential calcium-dependent cell-adhesion protein. May be involved in the establishment and maintenance of specific neuronal connections in the brain. The protein is Protocadherin gamma-A8 (PCDHGA8) of Homo sapiens (Human).